Here is a 144-residue protein sequence, read N- to C-terminus: Nucleoside diphosphate kinase (144 aa).

Residues Lys11, Phe59, Arg87, Thr93, Arg104, and Asn114 each coordinate ATP. His117 (pros-phosphohistidine intermediate) is an active-site residue.

This sequence belongs to the NDK family. In terms of assembly, homotetramer. It depends on Mg(2+) as a cofactor.

Its subcellular location is the cytoplasm. It catalyses the reaction a 2'-deoxyribonucleoside 5'-diphosphate + ATP = a 2'-deoxyribonucleoside 5'-triphosphate + ADP. The enzyme catalyses a ribonucleoside 5'-diphosphate + ATP = a ribonucleoside 5'-triphosphate + ADP. Functionally, major role in the synthesis of nucleoside triphosphates other than ATP. The ATP gamma phosphate is transferred to the NDP beta phosphate via a ping-pong mechanism, using a phosphorylated active-site intermediate. This is Nucleoside diphosphate kinase from Psychromonas ingrahamii (strain DSM 17664 / CCUG 51855 / 37).